Reading from the N-terminus, the 230-residue chain is Cytidylate kinase (230 aa).

10-18 (GPAGSGKST) lines the ATP pocket.

The protein belongs to the cytidylate kinase family. Type 1 subfamily.

It localises to the cytoplasm. The enzyme catalyses CMP + ATP = CDP + ADP. The catalysed reaction is dCMP + ATP = dCDP + ADP. This Leptospira borgpetersenii serovar Hardjo-bovis (strain JB197) protein is Cytidylate kinase.